Consider the following 32-residue polypeptide: Cytochrome b6-f complex subunit 7 (32 aa).

Residues 5 to 25 (IFTVAGVMWALVLTGLSVGFG) traverse the membrane as a helical segment.

It belongs to the PetM family. As to quaternary structure, the 4 large subunits of the cytochrome b6-f complex are cytochrome b6, subunit IV (17 kDa polypeptide, PetD), cytochrome f and the Rieske protein, while the 4 small subunits are PetG, PetL, PetM and PetN. The complex functions as a dimer.

It localises to the plastid. The protein localises to the chloroplast thylakoid membrane. In terms of biological role, component of the cytochrome b6-f complex, which mediates electron transfer between photosystem II (PSII) and photosystem I (PSI), cyclic electron flow around PSI, and state transitions. The protein is Cytochrome b6-f complex subunit 7 of Emiliania huxleyi (Coccolithophore).